Here is a 382-residue protein sequence, read N- to C-terminus: Transcription termination/antitermination protein NusA (382 aa).

Residues 135-199 enclose the S1 motif domain; that stretch reads EDIMTGIVQR…KGPQIMISRT (65 aa). In terms of domain architecture, KH spans 301–367; the sequence is EKTTQVIVPD…TLALDQETAD (67 aa). A disordered region spans residues 348–382; it reads LLEDEAASHETLALDQETADQPEATVETSKNHEEE.

This sequence belongs to the NusA family. Monomer. Binds directly to the core enzyme of the DNA-dependent RNA polymerase and to nascent RNA.

Its subcellular location is the cytoplasm. Functionally, participates in both transcription termination and antitermination. This chain is Transcription termination/antitermination protein NusA, found in Halalkalibacterium halodurans (strain ATCC BAA-125 / DSM 18197 / FERM 7344 / JCM 9153 / C-125) (Bacillus halodurans).